Here is a 275-residue protein sequence, read N- to C-terminus: MTNATPTPVIVTGAAGKMGREVIKAVVQADDLRLYAAVDRNPDVFSLDAGELVGLDTLNIELTNELEPVLAAAAQEKQPCVMVDFTHPSSVYSNIRSAIAYGVFPVIGTTGLSDEQMNDLTEFTEKASMGCLVIPNFSIGMVLLQQAAVQASQYFDHVEIIELHHNQKADAPSGTAVKTAQLLGDLGKTYNPALVEEKEHLAGARGSLGSENIRIHSIRLPGLIAHQEVLFGAPGQLYTLRHDTSDRACYMPGVLLSIRKVTQLQTLSYGLEKIL.

Residues 13 to 18 (GAAGKM) and 108 to 110 (GTT) contribute to the NAD(+) site. H164 (proton donor/acceptor) is an active-site residue. H165 serves as a coordination point for (S)-2,3,4,5-tetrahydrodipicolinate. K168 serves as the catalytic Proton donor. 174–175 (GT) is a binding site for (S)-2,3,4,5-tetrahydrodipicolinate.

Belongs to the DapB family.

Its subcellular location is the cytoplasm. The catalysed reaction is (S)-2,3,4,5-tetrahydrodipicolinate + NAD(+) + H2O = (2S,4S)-4-hydroxy-2,3,4,5-tetrahydrodipicolinate + NADH + H(+). The enzyme catalyses (S)-2,3,4,5-tetrahydrodipicolinate + NADP(+) + H2O = (2S,4S)-4-hydroxy-2,3,4,5-tetrahydrodipicolinate + NADPH + H(+). Its pathway is amino-acid biosynthesis; L-lysine biosynthesis via DAP pathway; (S)-tetrahydrodipicolinate from L-aspartate: step 4/4. Its function is as follows. Catalyzes the conversion of 4-hydroxy-tetrahydrodipicolinate (HTPA) to tetrahydrodipicolinate. This chain is 4-hydroxy-tetrahydrodipicolinate reductase, found in Acaryochloris marina (strain MBIC 11017).